Consider the following 311-residue polypeptide: Ribosomal RNA small subunit methyltransferase H (311 aa).

S-adenosyl-L-methionine-binding positions include 32–34, aspartate 52, phenylalanine 79, aspartate 100, and glutamine 107; that span reads AGH.

The protein belongs to the methyltransferase superfamily. RsmH family.

The protein resides in the cytoplasm. The enzyme catalyses cytidine(1402) in 16S rRNA + S-adenosyl-L-methionine = N(4)-methylcytidine(1402) in 16S rRNA + S-adenosyl-L-homocysteine + H(+). Specifically methylates the N4 position of cytidine in position 1402 (C1402) of 16S rRNA. This chain is Ribosomal RNA small subunit methyltransferase H, found in Staphylococcus aureus (strain Mu3 / ATCC 700698).